The following is a 63-amino-acid chain: Insect toxin TbIT-1 (63 aa).

The LCN-type CS-alpha/beta domain maps to 2–63 (KEGYPVDSRG…VYDNASNKCB (62 aa)). Disulfide bonds link Cys-12-Cys-62, Cys-16-Cys-38, Cys-24-Cys-43, and Cys-28-Cys-45.

The protein belongs to the long (4 C-C) scorpion toxin superfamily. Sodium channel inhibitor family. Beta subfamily. Expressed by the venom gland.

Its subcellular location is the secreted. Beta toxins bind voltage-independently at site-4 of sodium channels (Nav) and shift the voltage of activation toward more negative potentials thereby affecting sodium channel activation and promoting spontaneous and repetitive firing. This toxin is only active against insects. The polypeptide is Insect toxin TbIT-1 (Tityus bahiensis (Brazilian scorpion)).